A 437-amino-acid polypeptide reads, in one-letter code: RING finger protein 150 (437 aa).

Residues 1–34 form the signal peptide; it reads MTMSLIQACRSLALSTWLLSFCFVHLLCLDFTVA. The Extracellular portion of the chain corresponds to 35–207; it reads EKEEWYTAFV…NLQKYVSRTS (173 aa). Residues Asn45, Asn124, Asn152, and Asn185 are each glycosylated (N-linked (GlcNAc...) asparagine). Positions 80–182 constitute a PA domain; that stretch reads SPKQDARGEV…PKGKEIVSLL (103 aa). A helical transmembrane segment spans residues 208–228; it reads VVFVSISFIVLMIISLAWLVF. Residues 229–437 are Cytoplasmic-facing; that stretch reads YYIQRFRYAN…TDQDCEEVKS (209 aa). The segment at 277–318 adopts an RING-type; atypical zinc-finger fold; that stretch reads CAVCIEGYKPNDVVRILPCRHLFHKSCVDPWLLDHRTCPMCK.

The protein resides in the membrane. The protein is RING finger protein 150 (Rnf150) of Mus musculus (Mouse).